Reading from the N-terminus, the 414-residue chain is 26S proteasome regulatory subunit 8 homolog (414 aa).

Residue 197-204 participates in ATP binding; the sequence is GPPGTGKT.

It belongs to the AAA ATPase family.

It localises to the cytoplasm. The protein localises to the nucleus. Its function is as follows. The 26S proteasome is involved in the ATP-dependent degradation of ubiquitinated proteins. The regulatory (or ATPase) complex confers ATP dependency and substrate specificity to the 26S complex. The chain is 26S proteasome regulatory subunit 8 homolog from Naegleria fowleri (Brain eating amoeba).